The sequence spans 113 residues: Bactofilin BacN (113 aa).

This sequence belongs to the bactofilin family. Interacts with BacO and BacP, the 3 proteins colocalize as an extended structure.

The protein resides in the cytoplasm. Its subcellular location is the cytoskeleton. Functionally, a non-essential component of the chromosome segregation machinery. Positions the ParA-ParB-parS chromosome segregation machinery within the cell; BacP seems to be the most important bactofilin in this process. Forms a heteropolymeric, subpolar scaffold in the cell; BacP probably forms the core, BacO contributes to position and integrity while BacN does not seem to contribute to assembly. This Myxococcus xanthus (strain DK1622) protein is Bactofilin BacN.